The chain runs to 184 residues: UPF0149 protein PA14_69010 (184 aa).

Belongs to the UPF0149 family.

The polypeptide is UPF0149 protein PA14_69010 (Pseudomonas aeruginosa (strain UCBPP-PA14)).